The sequence spans 188 residues: MSANEDQEMELEALRSIYEGDESFRELSPVSFQYRIGENGDPKAFLIEISWTETYPQTPPILSMNAFFNNTISSAVKQSILAKLQEAVEANLGTAMTYTLFEYAKDNKEQFMENHNPINSATSISNIISIETPNTAPSSKKKDKKEQLSKAQKRKLADKTDHKGELPRGWNWVDVVKHLSKTGSKDDE.

Serine 2 is modified (N-acetylserine). Positions 9-111 constitute an RWD domain; the sequence is MELEALRSIY…EYAKDNKEQF (103 aa). A disordered region spans residues 132–167; that stretch reads TPNTAPSSKKKDKKEQLSKAQKRKLADKTDHKGELP. A compositionally biased stretch (basic and acidic residues) spans 155-166; that stretch reads KLADKTDHKGEL.

The polypeptide is RWD domain-containing protein 4 (RWDD4) (Homo sapiens (Human)).